The primary structure comprises 246 residues: MSEQIYGIHAVNAFLANAPERLIEVFVLKGREDKRLNPLLDELQRLSISVQQVNRQTLDNKAQGEVHQGIIARIIPQKELNEYDLNELLQHKSNPLLLILDGVTDPHNLGACLRTADAAGVDAVIVPKDKSATLTAIARKVACGAAEAMPLIRVTNLARTMRELQDKHQIWIVGTAGEATTDIYTSQLTGAIALVMGAEGDGMRRLTREHCDQLVSIPMAGSVSSLNVSVATGVCLFEIVRQKLSR.

3 residues coordinate S-adenosyl-L-methionine: Gly-197, Ile-217, and Leu-226.

Belongs to the class IV-like SAM-binding methyltransferase superfamily. RNA methyltransferase TrmH family. RlmB subfamily.

Its subcellular location is the cytoplasm. It carries out the reaction guanosine(2251) in 23S rRNA + S-adenosyl-L-methionine = 2'-O-methylguanosine(2251) in 23S rRNA + S-adenosyl-L-homocysteine + H(+). Functionally, specifically methylates the ribose of guanosine 2251 in 23S rRNA. The polypeptide is 23S rRNA (guanosine-2'-O-)-methyltransferase RlmB (Haemophilus ducreyi (strain 35000HP / ATCC 700724)).